We begin with the raw amino-acid sequence, 250 residues long: Geranylgeranylglyceryl phosphate synthase (250 aa).

Residues D23 and S52 each coordinate Mg(2+). Sn-glycerol 1-phosphate is bound by residues 170-176 (YIEAGSG), 202-203 (GG), and 224-225 (GT).

The protein belongs to the GGGP/HepGP synthase family. Group II subfamily. Mg(2+) is required as a cofactor.

The protein localises to the cytoplasm. The catalysed reaction is sn-glycerol 1-phosphate + (2E,6E,10E)-geranylgeranyl diphosphate = sn-3-O-(geranylgeranyl)glycerol 1-phosphate + diphosphate. Its pathway is membrane lipid metabolism; glycerophospholipid metabolism. Prenyltransferase that catalyzes the transfer of the geranylgeranyl moiety of geranylgeranyl diphosphate (GGPP) to the C3 hydroxyl of sn-glycerol-1-phosphate (G1P). This reaction is the first ether-bond-formation step in the biosynthesis of archaeal membrane lipids. The polypeptide is Geranylgeranylglyceryl phosphate synthase (Methanobrevibacter smithii (strain ATCC 35061 / DSM 861 / OCM 144 / PS)).